The chain runs to 517 residues: Ribose import ATP-binding protein RbsA 2 (517 aa).

2 ABC transporter domains span residues Leu-10–Ile-245 and Asp-255–His-498. ATP is bound at residue Gly-42 to Ser-49. Positions Thr-497 to His-517 are disordered.

Belongs to the ABC transporter superfamily. Ribose importer (TC 3.A.1.2.1) family. In terms of assembly, the complex is composed of an ATP-binding protein (RbsA), two transmembrane proteins (RbsC) and a solute-binding protein (RbsB).

It localises to the cell membrane. The catalysed reaction is D-ribose(out) + ATP + H2O = D-ribose(in) + ADP + phosphate + H(+). Part of the ABC transporter complex RbsABC involved in ribose import. Responsible for energy coupling to the transport system. The sequence is that of Ribose import ATP-binding protein RbsA 2 from Streptomyces coelicolor (strain ATCC BAA-471 / A3(2) / M145).